Reading from the N-terminus, the 110-residue chain is Large ribosomal subunit protein uL22 (110 aa).

Belongs to the universal ribosomal protein uL22 family. As to quaternary structure, part of the 50S ribosomal subunit.

Functionally, this protein binds specifically to 23S rRNA; its binding is stimulated by other ribosomal proteins, e.g. L4, L17, and L20. It is important during the early stages of 50S assembly. It makes multiple contacts with different domains of the 23S rRNA in the assembled 50S subunit and ribosome. The globular domain of the protein is located near the polypeptide exit tunnel on the outside of the subunit, while an extended beta-hairpin is found that lines the wall of the exit tunnel in the center of the 70S ribosome. This is Large ribosomal subunit protein uL22 from Pseudomonas aeruginosa (strain LESB58).